The chain runs to 583 residues: Ankyrin repeat and SOCS box protein 15 (583 aa).

11 ANK repeats span residues 75–104 (KGWFPLHEAVVQPIQQILETVLDASYKTLW), 110–139 (DGETPLTLAVKAGLVENVKTLLDKGVWPNT), 143–172 (KGETPLLIAIKRGSYDMVSALIKYNTSLDQ), 176–205 (KRWSAMHEAAKQGRKDIITLLLNHRGNVHL), 209–238 (FGVTPLGVAAEYGHCDVLEHLIHKGGDVFA), 242–271 (DGASVLFEAAGGGNPDCISLLLKYGGSGNV), 275–304 (AGHLPIHRAAYEGHYLALKYLIPVTSKHAI), 307–336 (SGLTPIHSAAEGQNAQCLELLIENGFDVNA), 349–378 (ERKTALYFAVSNNDIHCTEVLLAAGADPNL), 379–408 (DPLNCLLVAVRANRHEIVRLLLSYGANVNC), and 416–444 (TRFPSAIQYALNDEIMLRLLLNNGYQVEL). Positions 524-579 (WPEIRQIIENPCSLKHLCRLKIRRVMGLQRLCQPASIQMLPLPAAMRRYLLFKEFD) constitute an SOCS box domain.

The protein belongs to the ankyrin SOCS box (ASB) family.

It participates in protein modification; protein ubiquitination. Functionally, may be a substrate-recognition component of a SCF-like ECS (Elongin-Cullin-SOCS-box protein) E3 ubiquitin-protein ligase complex which mediates the ubiquitination and subsequent proteasomal degradation of target proteins. This chain is Ankyrin repeat and SOCS box protein 15 (Asb15), found in Mus musculus (Mouse).